Here is a 273-residue protein sequence, read N- to C-terminus: Manganese catalase (273 aa).

Residue Glu35 coordinates Mn(2+). Residues Asp57 and Asp61 each coordinate Ca(2+). Glu66, His69, Glu149, and His182 together coordinate Mn(2+). Ca(2+)-binding residues include Asn220, Ser222, and Gly224. The disordered stretch occupies residues 254–273 (EKPELKPAPPFVHNTLPGRE).

The protein belongs to the manganese catalase family. Requires Ca(2+) as cofactor. The cofactor is Mn(2+).

It carries out the reaction 2 H2O2 = O2 + 2 H2O. In terms of biological role, catalyzes the decomposition of hydrogen peroxide into water and oxygen. This chain is Manganese catalase (ydbD), found in Bacillus subtilis (strain 168).